Consider the following 179-residue polypeptide: Large ribosomal subunit protein uL5 (179 aa).

This sequence belongs to the universal ribosomal protein uL5 family. Part of the 50S ribosomal subunit; part of the 5S rRNA/L5/L18/L25 subcomplex. Contacts the 5S rRNA and the P site tRNA. Forms a bridge to the 30S subunit in the 70S ribosome.

Its function is as follows. This is one of the proteins that bind and probably mediate the attachment of the 5S RNA into the large ribosomal subunit, where it forms part of the central protuberance. In the 70S ribosome it contacts protein S13 of the 30S subunit (bridge B1b), connecting the 2 subunits; this bridge is implicated in subunit movement. Contacts the P site tRNA; the 5S rRNA and some of its associated proteins might help stabilize positioning of ribosome-bound tRNAs. The chain is Large ribosomal subunit protein uL5 from Klebsiella pneumoniae (strain 342).